A 287-amino-acid chain; its full sequence is Elongation factor Ts (287 aa).

Residues 80–83 (TDFL) form an involved in Mg(2+) ion dislocation from EF-Tu region.

The protein belongs to the EF-Ts family.

It localises to the cytoplasm. In terms of biological role, associates with the EF-Tu.GDP complex and induces the exchange of GDP to GTP. It remains bound to the aminoacyl-tRNA.EF-Tu.GTP complex up to the GTP hydrolysis stage on the ribosome. This chain is Elongation factor Ts, found in Pseudomonas entomophila (strain L48).